Reading from the N-terminus, the 305-residue chain is UDP-N-acetylenolpyruvoylglucosamine reductase (305 aa).

One can recognise an FAD-binding PCMH-type domain in the interval 35–214 (VGGPAQALFT…RARMNEVQAH (180 aa)). The active site involves R179. Residue S228 is the Proton donor of the active site. Residue E298 is part of the active site.

It belongs to the MurB family. FAD is required as a cofactor.

The protein resides in the cytoplasm. The enzyme catalyses UDP-N-acetyl-alpha-D-muramate + NADP(+) = UDP-N-acetyl-3-O-(1-carboxyvinyl)-alpha-D-glucosamine + NADPH + H(+). It participates in cell wall biogenesis; peptidoglycan biosynthesis. Cell wall formation. The polypeptide is UDP-N-acetylenolpyruvoylglucosamine reductase (Nitrobacter winogradskyi (strain ATCC 25391 / DSM 10237 / CIP 104748 / NCIMB 11846 / Nb-255)).